Consider the following 474-residue polypeptide: Calcitonin receptor (474 aa).

A signal peptide spans 1–24 (MRFTFTSRCLALFLLLNHPTPILP). Over 25–146 (AFSNQTYPTI…FTPEKLKNAY (122 aa)) the chain is Extracellular. Residues N28, N73, N125, and N130 are each glycosylated (N-linked (GlcNAc...) asparagine). 3 disulfides stabilise this stretch: C55–C81, C72–C112, and C95–C134. Residues 147 to 169 (VLYYLAIVGHSLSIFTLVISLGI) traverse the membrane as a helical segment. Residues 170-181 (FVFFRSLGCQRV) are Cytoplasmic-facing. The chain crosses the membrane as a helical span at residues 182-202 (TLHKNMFLTYILNSMIIIIHL). The Extracellular segment spans residues 203 to 219 (VEVVPNGELVRRDPVSC). Cysteines 219 and 289 form a disulfide. Residues 220–242 (KILHFFHQYMMACNYFWMLCEGI) form a helical membrane-spanning segment. The Cytoplasmic segment spans residues 243–259 (YLHTLIVVAVFTEKQRL). The chain crosses the membrane as a helical span at residues 260–280 (RWYYLLGWGFPLVPTTIHAIT). The Extracellular segment spans residues 281-296 (RAVYFNDNCWLSVETH). A helical transmembrane segment spans residues 297–320 (LLYIIHGPVMAALVVNFFFLLNIV). Topologically, residues 321–340 (RVLVTKMRETHEAESHMYLK) are cytoplasmic. A helical transmembrane segment spans residues 341 to 359 (AVKATMILVPLLGIQFVVF). Topologically, residues 360-367 (PWRPSNKM) are extracellular. The chain crosses the membrane as a helical span at residues 368–394 (LGKIYDYVMHSLIHFQGFFVATIYCFC). The Cytoplasmic portion of the chain corresponds to 395 to 474 (NNEVQTTVKR…LNIIEQESSA (80 aa)).

Belongs to the G-protein coupled receptor 2 family. In terms of assembly, heterodimer of CALCR and RAMP1, RAMP2 or RAMP3; the receptor complexes function as AMYR1, AMYR2 and AMYR3 receptors, respectively, and respond to amylin/IAPP, calcitonin/CT and CGRP1 ligands. Interacts with GPRASP2.

It localises to the cell membrane. With respect to regulation, sensitive to cholera toxin. G protein-coupled receptor activated by ligand peptides amylin (IAPP), calcitonin (CT/CALCA) and calcitonin gene-related peptide type 1 (CGRP1/CALCA). CALCR interacts with receptor-activity-modifying proteins RAMP1, 2 and 3 to form receptor complexes AMYR1, 2 and 3, respectively. IAPP, CT and CGRP1 activate CALCR and AMYRs with distinct modes of receptor activation resulting in specific phenotypes. Ligand binding causes a conformation change that triggers signaling via guanine nucleotide-binding proteins (G proteins) and modulates the activity of downstream effectors. Activates cAMP-dependent pathway. Functionally, non-functional protein. Unable to couple to G proteins and activate adenylyl cyclase. Does not undergo receptor internalization following ligand binding. The protein is Calcitonin receptor of Homo sapiens (Human).